Here is a 543-residue protein sequence, read N- to C-terminus: CTP synthase (543 aa).

Positions 1–267 (MAKFVFVTGG…CREVLDVLNL (267 aa)) are amidoligase domain. CTP is bound at residue Ser13. Residue Ser13 coordinates UTP. 14-19 (SIGKGI) serves as a coordination point for ATP. Tyr54 lines the L-glutamine pocket. Asp71 serves as a coordination point for ATP. Residues Asp71 and Glu141 each coordinate Mg(2+). CTP contacts are provided by residues 148–150 (DIE), 188–193 (KTKPTQ), and Lys224. UTP contacts are provided by residues 188–193 (KTKPTQ) and Lys224. Residues 292–534 (KVALVGKYVQ…IEAAQQRLPN (243 aa)) enclose the Glutamine amidotransferase type-1 domain. Gly354 lines the L-glutamine pocket. The Nucleophile; for glutamine hydrolysis role is filled by Cys381. L-glutamine-binding positions include 382–385 (LGMQ), Glu405, and Arg462. Active-site residues include His507 and Glu509.

This sequence belongs to the CTP synthase family. In terms of assembly, homotetramer.

It carries out the reaction UTP + L-glutamine + ATP + H2O = CTP + L-glutamate + ADP + phosphate + 2 H(+). It catalyses the reaction L-glutamine + H2O = L-glutamate + NH4(+). The catalysed reaction is UTP + NH4(+) + ATP = CTP + ADP + phosphate + 2 H(+). The protein operates within pyrimidine metabolism; CTP biosynthesis via de novo pathway; CTP from UDP: step 2/2. Allosterically activated by GTP, when glutamine is the substrate; GTP has no effect on the reaction when ammonia is the substrate. The allosteric effector GTP functions by stabilizing the protein conformation that binds the tetrahedral intermediate(s) formed during glutamine hydrolysis. Inhibited by the product CTP, via allosteric rather than competitive inhibition. Catalyzes the ATP-dependent amination of UTP to CTP with either L-glutamine or ammonia as the source of nitrogen. Regulates intracellular CTP levels through interactions with the four ribonucleotide triphosphates. In Synechococcus sp. (strain WH7803), this protein is CTP synthase.